A 453-amino-acid chain; its full sequence is DNA repair protein RadA (453 aa).

The segment at 11–28 (CNQCGATAPKWLGQCPGC) adopts a C4-type zinc-finger fold. An ATP-binding site is contributed by 93 to 100 (GDPGIGKS). Residues 250–254 (KNRFG) carry the RadA KNRFG motif motif. The interval 349 to 453 (DVFLSITGGL…TIKDAIRLLL (105 aa)) is lon-protease-like.

It belongs to the RecA family. RadA subfamily.

In terms of biological role, DNA-dependent ATPase involved in processing of recombination intermediates, plays a role in repairing DNA breaks. Stimulates the branch migration of RecA-mediated strand transfer reactions, allowing the 3' invading strand to extend heteroduplex DNA faster. Binds ssDNA in the presence of ADP but not other nucleotides, has ATPase activity that is stimulated by ssDNA and various branched DNA structures, but inhibited by SSB. Does not have RecA's homology-searching function. This is DNA repair protein RadA from Chlamydia pneumoniae (Chlamydophila pneumoniae).